The primary structure comprises 365 residues: A-type ATP synthase subunit C (365 aa).

It belongs to the V-ATPase V0D/AC39 subunit family. In terms of assembly, has multiple subunits with at least A(3), B(3), C, D, E, F, H, I and proteolipid K(x).

The protein resides in the cell membrane. Component of the A-type ATP synthase that produces ATP from ADP in the presence of a proton gradient across the membrane. The sequence is that of A-type ATP synthase subunit C from Thermococcus kodakarensis (strain ATCC BAA-918 / JCM 12380 / KOD1) (Pyrococcus kodakaraensis (strain KOD1)).